A 399-amino-acid chain; its full sequence is S-adenosylmethionine synthase (399 aa).

H17 contributes to the ATP binding site. Position 19 (D19) interacts with Mg(2+). E45 is a binding site for K(+). Positions 58 and 101 each coordinate L-methionine. Positions Q101 to Q111 are flexible loop. Residues D177–K179, R244–F245, D253, R259–K260, A276, and K280 each bind ATP. L-methionine is bound at residue D253. Residue K284 participates in L-methionine binding.

This sequence belongs to the AdoMet synthase family. As to quaternary structure, homotetramer; dimer of dimers. Mg(2+) is required as a cofactor. It depends on K(+) as a cofactor.

It localises to the cytoplasm. It carries out the reaction L-methionine + ATP + H2O = S-adenosyl-L-methionine + phosphate + diphosphate. The protein operates within amino-acid biosynthesis; S-adenosyl-L-methionine biosynthesis; S-adenosyl-L-methionine from L-methionine: step 1/1. Its function is as follows. Catalyzes the formation of S-adenosylmethionine (AdoMet) from methionine and ATP. The overall synthetic reaction is composed of two sequential steps, AdoMet formation and the subsequent tripolyphosphate hydrolysis which occurs prior to release of AdoMet from the enzyme. The chain is S-adenosylmethionine synthase from Bacillus thuringiensis subsp. konkukian (strain 97-27).